The sequence spans 583 residues: COP9 signalosome complex subunit 10 (583 aa).

Residues 1–35 (MSDEEDYAEYMMSEEDMSSFEMDVDSDVEPDDAGL) are compositionally biased toward acidic residues. Residues 1 to 55 (MSDEEDYAEYMMSEEDMSSFEMDVDSDVEPDDAGLEQDQQVTGDDYDGSAGNSGD) are disordered. Residues 297–485 (DHYNQSQMLS…DYVYFGEEYF (189 aa)) enclose the PCI domain.

As to quaternary structure, component of a COP9 signalosome-like (CSN) complex.

The protein localises to the cytoplasm. Its subcellular location is the nucleus. In terms of biological role, component of the COP9 signalosome (CSN) complex that acts as an regulator of the ubiquitin (Ubl) conjugation pathway by mediating the deneddylation of the cullin subunit of SCF-type E3 ubiquitin-protein ligase complexes. The CSN complex is involved in the regulation of the mating pheromone response. In Kluyveromyces lactis (strain ATCC 8585 / CBS 2359 / DSM 70799 / NBRC 1267 / NRRL Y-1140 / WM37) (Yeast), this protein is COP9 signalosome complex subunit 10 (RRI2).